A 522-amino-acid polypeptide reads, in one-letter code: Lysine--tRNA ligase (522 aa).

Positions 44-52 (PSGLPHIGT) match the 'HIGH' region motif. A 'KMSKS' region motif is present at residues 290–294 (KISKS). Lysine 293 provides a ligand contact to ATP.

The protein belongs to the class-I aminoacyl-tRNA synthetase family.

Its subcellular location is the cytoplasm. The catalysed reaction is tRNA(Lys) + L-lysine + ATP = L-lysyl-tRNA(Lys) + AMP + diphosphate. The polypeptide is Lysine--tRNA ligase (Rickettsia peacockii (strain Rustic)).